The chain runs to 529 residues: Bifunctional purine biosynthesis protein PurH (529 aa).

In terms of domain architecture, MGS-like spans 1-148 (MQQRRPIRRA…KNHKDVAIVV (148 aa)).

It belongs to the PurH family.

It carries out the reaction (6R)-10-formyltetrahydrofolate + 5-amino-1-(5-phospho-beta-D-ribosyl)imidazole-4-carboxamide = 5-formamido-1-(5-phospho-D-ribosyl)imidazole-4-carboxamide + (6S)-5,6,7,8-tetrahydrofolate. It catalyses the reaction IMP + H2O = 5-formamido-1-(5-phospho-D-ribosyl)imidazole-4-carboxamide. It participates in purine metabolism; IMP biosynthesis via de novo pathway; 5-formamido-1-(5-phospho-D-ribosyl)imidazole-4-carboxamide from 5-amino-1-(5-phospho-D-ribosyl)imidazole-4-carboxamide (10-formyl THF route): step 1/1. It functions in the pathway purine metabolism; IMP biosynthesis via de novo pathway; IMP from 5-formamido-1-(5-phospho-D-ribosyl)imidazole-4-carboxamide: step 1/1. This Pectobacterium carotovorum subsp. carotovorum (strain PC1) protein is Bifunctional purine biosynthesis protein PurH.